Consider the following 283-residue polypeptide: Thymidylate synthase (283 aa).

Residue arginine 22 participates in dUMP binding. The active-site Nucleophile is the cysteine 160. DUMP is bound by residues 180-183, asparagine 191, and 221-223; these read RSCD and HIY. Aspartate 183 contributes to the (6R)-5,10-methylene-5,6,7,8-tetrahydrofolate binding site. (6R)-5,10-methylene-5,6,7,8-tetrahydrofolate is bound at residue alanine 282.

Belongs to the thymidylate synthase family. Bacterial-type ThyA subfamily. Homodimer.

The protein localises to the cytoplasm. It carries out the reaction dUMP + (6R)-5,10-methylene-5,6,7,8-tetrahydrofolate = 7,8-dihydrofolate + dTMP. The protein operates within pyrimidine metabolism; dTTP biosynthesis. Functionally, catalyzes the reductive methylation of 2'-deoxyuridine-5'-monophosphate (dUMP) to 2'-deoxythymidine-5'-monophosphate (dTMP) while utilizing 5,10-methylenetetrahydrofolate (mTHF) as the methyl donor and reductant in the reaction, yielding dihydrofolate (DHF) as a by-product. This enzymatic reaction provides an intracellular de novo source of dTMP, an essential precursor for DNA biosynthesis. This is Thymidylate synthase from Shewanella frigidimarina (strain NCIMB 400).